The primary structure comprises 1262 residues: Isoleucine--tRNA ligase, cytoplasmic (1262 aa).

An N-acetylmethionine modification is found at methionine 1. The 'HIGH' region signature appears at 48-58 (PFATGLPHYGH). Residues 600–604 (KMSKR) carry the 'KMSKS' region motif. An ATP-binding site is contributed by lysine 603. Serine 1049 carries the phosphoserine modification. Phosphothreonine is present on threonine 1058.

Belongs to the class-I aminoacyl-tRNA synthetase family. As to quaternary structure, part of a multisubunit complex that groups tRNA ligases for Arg (RARS1), Asp (DARS1), Gln (QARS1), Ile (IARS1), Leu (LARS1), Lys (KARS1), Met (MARS1) the bifunctional ligase for Glu and Pro (EPRS1) and the auxiliary subunits AIMP1/p43, AIMP2/p38 and EEF1E1/p18.

The protein localises to the cytoplasm. It localises to the cytosol. It catalyses the reaction tRNA(Ile) + L-isoleucine + ATP = L-isoleucyl-tRNA(Ile) + AMP + diphosphate. Its function is as follows. Catalyzes the specific attachment of an amino acid to its cognate tRNA in a 2 step reaction: the amino acid (AA) is first activated by ATP to form AA-AMP and then transferred to the acceptor end of the tRNA. The protein is Isoleucine--tRNA ligase, cytoplasmic (Iars1) of Mus musculus (Mouse).